A 136-amino-acid polypeptide reads, in one-letter code: MARTKQTARKSTGGKAPRKQLASKAARKSAPSTGGVKKPHRYKPGTVALREIRRFQKSTELLIRKLPFQRLVREIAQDFKTDLRFQSSAIGALQEAVEAYLVGLFEDTNLCAIHAKRVTIQKKDIQLARRLRGERS.

The disordered stretch occupies residues Met-1 to Lys-43. At Lys-5 the chain carries N6,N6,N6-trimethyllysine; alternate. Position 5 is an N6,N6-dimethyllysine; alternate (Lys-5). N6-methyllysine; alternate occurs at positions 5 and 10. Lys-10 is subject to N6-acetyllysine; alternate. Position 11 is a phosphoserine (Ser-11). Lys-15 is modified (N6,N6-dimethyllysine; alternate). N6-acetyllysine; alternate occurs at positions 15, 19, 24, 28, and 37. N6-methyllysine; alternate is present on residues Lys-19, Lys-24, Lys-28, and Lys-37. N6,N6,N6-trimethyllysine; alternate is present on residues Lys-28 and Lys-37. Lys-28 and Lys-37 each carry N6,N6-dimethyllysine; alternate. 2 positions are modified to N6-acetyllysine: Lys-57 and Lys-65. Lys-80 carries the N6,N6,N6-trimethyllysine; alternate modification. Lys-80 bears the N6,N6-dimethyllysine; alternate mark. Lys-80 is modified (N6-methyllysine; alternate).

The protein belongs to the histone H3 family. As to quaternary structure, the nucleosome is a histone octamer containing two molecules each of H2A, H2B, H3 and H4 assembled in one H3-H4 heterotetramer and two H2A-H2B heterodimers. The octamer wraps approximately 147 bp of DNA. Phosphorylated to form H3S10ph. H3S10ph promotes subsequent H3K14ac formation and is required for transcriptional activation through TBP recruitment to the promoters. In terms of processing, mono-, di- and trimethylated by the COMPASS complex to form H3K4me1/2/3. H3K4me activates gene expression by regulating transcription elongation and plays a role in telomere length maintenance. H3K4me enrichment correlates with transcription levels, and occurs in a 5' to 3' gradient with H3K4me3 enrichment at the 5'-end of genes, shifting to H3K4me2 and then H3K4me1. Methylated by SET2 to form H3K36me. H3K36me represses gene expression. Methylated by DOT1 to form H3K79me. H3K79me is required for association of SIR proteins with telomeric regions and for telomeric silencing. The COMPASS-mediated formation of H3K4me2/3 and the DOT1-mediated formation of H3K79me require H2BK123ub1. Post-translationally, acetylation of histone H3 leads to transcriptional activation. H3K14ac formation by GCN5 is promoted by H3S10ph. H3K14ac can also be formed by ESA1. H3K56ac formation occurs predominantly in newly synthesized H3 molecules during G1, S and G2/M of the cell cycle and may be involved in DNA repair.

It is found in the nucleus. Its subcellular location is the chromosome. Its function is as follows. Core component of nucleosome. Nucleosomes wrap and compact DNA into chromatin, limiting DNA accessibility to the cellular machineries which require DNA as a template. Histones thereby play a central role in transcription regulation, DNA repair, DNA replication and chromosomal stability. DNA accessibility is regulated via a complex set of post-translational modifications of histones, also called histone code, and nucleosome remodeling. The chain is Histone H3.1/H3.2 (HHT1) from Lodderomyces elongisporus (strain ATCC 11503 / CBS 2605 / JCM 1781 / NBRC 1676 / NRRL YB-4239) (Yeast).